We begin with the raw amino-acid sequence, 230 residues long: Urease accessory protein UreF (230 aa).

This sequence belongs to the UreF family. As to quaternary structure, ureD, UreF and UreG form a complex that acts as a GTP-hydrolysis-dependent molecular chaperone, activating the urease apoprotein by helping to assemble the nickel containing metallocenter of UreC. The UreE protein probably delivers the nickel.

The protein localises to the cytoplasm. Its function is as follows. Required for maturation of urease via the functional incorporation of the urease nickel metallocenter. The protein is Urease accessory protein UreF of Chromohalobacter salexigens (strain ATCC BAA-138 / DSM 3043 / CIP 106854 / NCIMB 13768 / 1H11).